The following is a 271-amino-acid chain: uncharacterized protein (271 aa).

The next 3 helical transmembrane spans lie at 11-33 (GWLA…LAPW), 172-194 (SINT…LQLI), and 214-236 (FLSY…GYFA). Residues 245–271 (REKAGSPPPDKPMTVEQKLADRYGRRR) are disordered. The segment covering 262–271 (KLADRYGRRR) has biased composition (basic and acidic residues).

The protein belongs to the SURF1 family.

The protein localises to the cell membrane. This is an uncharacterized protein from Mycobacterium tuberculosis (strain CDC 1551 / Oshkosh).